A 247-amino-acid chain; its full sequence is Uridylate kinase (247 aa).

Residue 18–21 (KLSG) participates in ATP binding. Gly60 provides a ligand contact to UMP. ATP is bound by residues Gly61 and Arg65. UMP contacts are provided by residues Asp80 and 141-148 (TGNPFFTT). ATP contacts are provided by Thr168, Tyr174, and Asp177.

It belongs to the UMP kinase family. In terms of assembly, homohexamer.

It is found in the cytoplasm. It carries out the reaction UMP + ATP = UDP + ADP. Its pathway is pyrimidine metabolism; CTP biosynthesis via de novo pathway; UDP from UMP (UMPK route): step 1/1. With respect to regulation, inhibited by UTP. Its function is as follows. Catalyzes the reversible phosphorylation of UMP to UDP. The polypeptide is Uridylate kinase (Stutzerimonas stutzeri (strain A1501) (Pseudomonas stutzeri)).